A 176-amino-acid chain; its full sequence is MDAAFVITPMGVLTITDTLYDDLDISIMDFIGPYIIGNIKTVQIDVRDIKYSDMQKCYFSYKGKIVPQDSNDLARFNIYSICAAYRSKNTIIIACDYDIMLDIEDKHQPFYLFPSIDVFNATIIEAYNLYTAGDYHLIINPSDNLKMKLLFNSSFCISDGNGWIIIDGKCNSNFLS.

A signal peptide spans 1 to 14 (MDAAFVITPMGVLT).

It belongs to the orthopoxvirus OPG163 family.

The protein localises to the host endosome. In terms of biological role, mildly affects the expression of MHC class II molecules on the surface of host antigen presenting cells (APCs). This chain is Protein OPG163 (OPG163), found in Vaccinia virus (strain Western Reserve) (VACV).